We begin with the raw amino-acid sequence, 89 residues long: Small ribosomal subunit protein uS15 (89 aa).

It belongs to the universal ribosomal protein uS15 family. As to quaternary structure, part of the 30S ribosomal subunit. Forms a bridge to the 50S subunit in the 70S ribosome, contacting the 23S rRNA.

One of the primary rRNA binding proteins, it binds directly to 16S rRNA where it helps nucleate assembly of the platform of the 30S subunit by binding and bridging several RNA helices of the 16S rRNA. In terms of biological role, forms an intersubunit bridge (bridge B4) with the 23S rRNA of the 50S subunit in the ribosome. This chain is Small ribosomal subunit protein uS15, found in Mycolicibacterium smegmatis (strain ATCC 700084 / mc(2)155) (Mycobacterium smegmatis).